The primary structure comprises 118 residues: Large ribosomal subunit protein bL19 (118 aa).

The protein belongs to the bacterial ribosomal protein bL19 family.

In terms of biological role, this protein is located at the 30S-50S ribosomal subunit interface and may play a role in the structure and function of the aminoacyl-tRNA binding site. The polypeptide is Large ribosomal subunit protein bL19 (Levilactobacillus brevis (strain ATCC 367 / BCRC 12310 / CIP 105137 / JCM 1170 / LMG 11437 / NCIMB 947 / NCTC 947) (Lactobacillus brevis)).